Here is a 580-residue protein sequence, read N- to C-terminus: MNNQIMTTYIGRLMDEFVQGGVQEAVVCPGSRSTPLAMLALAHQDINVHVLVDERSAAFYALGLAKASQTPVLLICTSGTAAANFYPAIVEAHYSRVPLIVLTADRPHELREVGAPQAIDQQFLFGKFVKWFTDLALPEESQMMLRYVQTAAARANHMSMQEPKGPVQINVPLREPLLPDLSIHPFDREETDRKKVLATGQAYPNDDALSEIVTVMNRSKKGLIVCGELHTQKEKEAVLRLSKDLHLPILADPLSHLRNGHEHAELIIDAYDSLLKDEALQQHLLPDMVIRFGPMPVSKPLFKWLEKHAEVNQIVVDAAGGFRDPGLSASYIIESDVAAFVDEVVNRADQREDTSFLNRWQHANSSFRTHASHYSDEDLSFEGNVYRQLQHLLPKESVLFIGNSMPIRDVDTFFEAQSKPFRMMANRGANGIDGVVSTALGTYAALKQPVTLVIGDLSFYHDMNGLLAAKLMDIPLTVVLLNNDGGGIFSFLPQASEEPYYEKLFGTPTGLNFEYASKLYGGTYSKPSTKQEFHDVYKAHIEEPGLHLIEIETDRHSRVSKHRQMMDDILEEVKKECLLS.

The protein belongs to the TPP enzyme family. MenD subfamily. As to quaternary structure, homodimer. Requires Mg(2+) as cofactor. Mn(2+) is required as a cofactor. It depends on thiamine diphosphate as a cofactor.

The enzyme catalyses isochorismate + 2-oxoglutarate + H(+) = 5-enolpyruvoyl-6-hydroxy-2-succinyl-cyclohex-3-ene-1-carboxylate + CO2. Its pathway is quinol/quinone metabolism; 1,4-dihydroxy-2-naphthoate biosynthesis; 1,4-dihydroxy-2-naphthoate from chorismate: step 2/7. It participates in quinol/quinone metabolism; menaquinone biosynthesis. In terms of biological role, catalyzes the thiamine diphosphate-dependent decarboxylation of 2-oxoglutarate and the subsequent addition of the resulting succinic semialdehyde-thiamine pyrophosphate anion to isochorismate to yield 2-succinyl-5-enolpyruvyl-6-hydroxy-3-cyclohexene-1-carboxylate (SEPHCHC). The protein is 2-succinyl-5-enolpyruvyl-6-hydroxy-3-cyclohexene-1-carboxylate synthase of Bacillus pumilus (strain SAFR-032).